We begin with the raw amino-acid sequence, 316 residues long: Very-long-chain 3-oxooacyl-coA reductase let-767 (316 aa).

NADP(+) is bound by residues 52–80 (ITGA…VSRT) and Asp106. Ser189 lines the substrate pocket. The Proton acceptor role is filled by Tyr202. An NADP(+)-binding site is contributed by Lys206.

The protein belongs to the short-chain dehydrogenases/reductases (SDR) family. 17-beta-HSD 3 subfamily.

It catalyses the reaction a very-long-chain (3R)-3-hydroxyacyl-CoA + NADP(+) = a very-long-chain 3-oxoacyl-CoA + NADPH + H(+). Its pathway is lipid metabolism; fatty acid biosynthesis. Functionally, required for branched chain fatty acid synthesis. Catalyzes the reduction of the 3-ketoacyl-CoA intermediate that is formed in each cycle of fatty acid elongation. Very long-chain fatty acids (VLCFAs) serve as precursors for ceramide and sphingolipids. May also be required for sterol hormone production. In Caenorhabditis briggsae, this protein is Very-long-chain 3-oxooacyl-coA reductase let-767.